Reading from the N-terminus, the 169-residue chain is Peptide methionine sulfoxide reductase MsrA (169 aa).

The active site involves Cys10.

This sequence belongs to the MsrA Met sulfoxide reductase family.

The catalysed reaction is L-methionyl-[protein] + [thioredoxin]-disulfide + H2O = L-methionyl-(S)-S-oxide-[protein] + [thioredoxin]-dithiol. The enzyme catalyses [thioredoxin]-disulfide + L-methionine + H2O = L-methionine (S)-S-oxide + [thioredoxin]-dithiol. In terms of biological role, has an important function as a repair enzyme for proteins that have been inactivated by oxidation. Catalyzes the reversible oxidation-reduction of methionine sulfoxide in proteins to methionine. The polypeptide is Peptide methionine sulfoxide reductase MsrA (Streptococcus equi subsp. zooepidemicus (strain MGCS10565)).